Consider the following 145-residue polypeptide: Cell wall teichoic acid glycosylation protein GtcA (145 aa).

4 helical membrane passes run 21–41 (ILMYLIMGGFTTLINIVTFWL), 52–69 (IANTIAWVASVLFAYFSN), 96–116 (FLTYIVDFLVMILLISGLGIN), and 121–141 (KIWTNVIVLILNYVFSKWIIF).

This sequence belongs to the GtrA family.

The protein localises to the cell membrane. Functionally, involved in the decoration of cell wall teichoic acid with galactose and glucose. The sequence is that of Cell wall teichoic acid glycosylation protein GtcA (gtcA) from Listeria innocua serovar 6a (strain ATCC BAA-680 / CLIP 11262).